The primary structure comprises 128 residues: Ribonuclease pancreatic (128 aa).

A compositionally biased stretch (basic and acidic residues) spans 1 to 13; the sequence is GESRAEKFQRQHM. Residues 1-24 are disordered; sequence GESRAEKFQRQHMDSGSSPSSSST. Positions 7 and 10 each coordinate substrate. The Proton acceptor role is filled by His12. 4 cysteine pairs are disulfide-bonded: Cys26-Cys84, Cys40-Cys95, Cys58-Cys110, and Cys65-Cys72. A glycan (N-linked (GlcNAc...) asparagine) is linked at Asn34. Substrate-binding positions include 41–45, Lys66, and Arg85; that span reads KSVNT. His119 functions as the Proton donor in the catalytic mechanism.

Belongs to the pancreatic ribonuclease family. In terms of assembly, monomer. Interacts with and forms tight 1:1 complexes with RNH1. Dimerization of two such complexes may occur. Interaction with RNH1 inhibits this protein. As to expression, pancreas and other tissues and body fluids (indicating it may have other physiological functions besides its role in digestion).

The protein resides in the secreted. The enzyme catalyses an [RNA] containing cytidine + H2O = an [RNA]-3'-cytidine-3'-phosphate + a 5'-hydroxy-ribonucleotide-3'-[RNA].. It carries out the reaction an [RNA] containing uridine + H2O = an [RNA]-3'-uridine-3'-phosphate + a 5'-hydroxy-ribonucleotide-3'-[RNA].. In terms of biological role, endonuclease that catalyzes the cleavage of RNA on the 3' side of pyrimidine nucleotides. Acts on single-stranded and double-stranded RNA. This chain is Ribonuclease pancreatic (RNASE1), found in Semnopithecus entellus (Northern plains gray langur).